We begin with the raw amino-acid sequence, 465 residues long: Mothers against decapentaplegic homolog 5 (465 aa).

Threonine 2 is subject to N-acetylthreonine. The 125-residue stretch at 13–137 folds into the MH1 domain; the sequence is PAVKRLLGWK…YKRVESPVLP (125 aa). Zn(2+)-binding residues include cysteine 65, cysteine 110, cysteine 122, and histidine 127. A disordered region spans residues 163 to 251; that stretch reads NEPHMPQNAT…DTSSNMIPQT (89 aa). The segment covering 169–182 has biased composition (polar residues); that stretch reads QNATFPDSFHQPNN. Over residues 186–197 the composition is skewed to pro residues; the sequence is PLSPNSPYPPSP. Residues 198 to 214 show a composition bias toward low complexity; it reads ASSTYPNSPASSGPGSP. Positions 237-251 are enriched in polar residues; sequence NSQPMDTSSNMIPQT. The 195-residue stretch at 271–465 folds into the MH2 domain; that stretch reads WCSIVYYELN…SPLNPISSVS (195 aa). A phosphoserine mark is found at serine 463 and serine 465.

Belongs to the dwarfin/SMAD family. As to quaternary structure, homodimer. Forms trimers with the co-SMAD SMAD4. Interacts with PEBP2-alpha subunit and SMURF1. Interacts with SUV39H1 and SUV39H2. Interacts (via MH2 domain) with LEMD3. Interacts with WWP1. Interacts with TMEM119. Interacts with ZNF8. Interacts with RANBP3L. Interacts with HK1. Interacts with HGS; this interaction attenuates BMP signaling. In terms of processing, phosphorylated on serine by BMP (bone morphogenetic proteins) type 1 receptor kinase. Ubiquitin-mediated proteolysis by SMAD-specific E3 ubiquitin ligase SMURF1. As to expression, predominantly expressed in mesenchyme and somites during embryogenesis, and present in many tissues of the adult.

The protein resides in the cytoplasm. It is found in the nucleus. Its subcellular location is the mitochondrion. Functionally, transcriptional regulator that plays a role in various cellular processes including embryonic development, cell differentiation, angiogenesis and tissue homeostasis. Upon BMP ligand binding to their receptors at the cell surface, is phosphorylated by activated type I BMP receptors (BMPRIs) and associates with SMAD4 to form a heteromeric complex which translocates into the nucleus acting as transcription factor. In turn, the hetero-trimeric complex recognizes cis-regulatory elements containing Smad Binding Elements (SBEs) to modulate the outcome of the signaling network. Non-phosphorylated SMAD5 has a cytoplasmic role in energy metabolism regulation by promoting mitochondrial respiration and glycolysis in response to cytoplasmic pH changes. Mechanistically, interacts with hexokinase 1/HK1 and thereby accelerates glycolysis. The sequence is that of Mothers against decapentaplegic homolog 5 (Smad5) from Mus musculus (Mouse).